Consider the following 561-residue polypeptide: Arginine--tRNA ligase (561 aa).

Positions 123–133 (PNIAKDMHVGH) match the 'HIGH' region motif.

The protein belongs to the class-I aminoacyl-tRNA synthetase family. As to quaternary structure, monomer.

It localises to the cytoplasm. The enzyme catalyses tRNA(Arg) + L-arginine + ATP = L-arginyl-tRNA(Arg) + AMP + diphosphate. The polypeptide is Arginine--tRNA ligase (argS) (Chlamydia pneumoniae (Chlamydophila pneumoniae)).